Consider the following 680-residue polypeptide: DNA ligase (680 aa).

NAD(+) is bound by residues 35–39 (DADFD), 86–87 (SL), and glutamate 111. Lysine 113 serves as the catalytic N6-AMP-lysine intermediate. Arginine 134, glutamate 174, lysine 290, and lysine 314 together coordinate NAD(+). Zn(2+) is bound by residues cysteine 408, cysteine 411, cysteine 427, and cysteine 433. The BRCT domain occupies 597-680 (VAEQTLEGLT…RLLNTGSADE (84 aa)).

Belongs to the NAD-dependent DNA ligase family. LigA subfamily. Requires Mg(2+) as cofactor. The cofactor is Mn(2+).

The catalysed reaction is NAD(+) + (deoxyribonucleotide)n-3'-hydroxyl + 5'-phospho-(deoxyribonucleotide)m = (deoxyribonucleotide)n+m + AMP + beta-nicotinamide D-nucleotide.. Its function is as follows. DNA ligase that catalyzes the formation of phosphodiester linkages between 5'-phosphoryl and 3'-hydroxyl groups in double-stranded DNA using NAD as a coenzyme and as the energy source for the reaction. It is essential for DNA replication and repair of damaged DNA. The polypeptide is DNA ligase (Corynebacterium glutamicum (strain ATCC 13032 / DSM 20300 / JCM 1318 / BCRC 11384 / CCUG 27702 / LMG 3730 / NBRC 12168 / NCIMB 10025 / NRRL B-2784 / 534)).